Consider the following 310-residue polypeptide: Putative olfactory receptor 7A2 (310 aa).

Over 1-26 (MVKAGNETQISEFLLLGFSEKQELQP) the chain is Extracellular. Asn6 carries N-linked (GlcNAc...) asparagine glycosylation. The chain crosses the membrane as a helical span at residues 27-47 (FLFGLFLSMYLVTVLGNLLII). Residues 48 to 55 (LAAISDSC) are Cytoplasmic-facing. A helical membrane pass occupies residues 56-76 (LHTPMYFFLSNLSFVDICFAS). Over 77–100 (TMVPKMLVNIQTQSKVITYAGCIT) the chain is Extracellular. A disulfide bridge links Cys98 with Cys190. A helical membrane pass occupies residues 101-121 (QMCFFVLFIVLDSLLLTVMAY). The Cytoplasmic portion of the chain corresponds to 122–140 (DQFVAICHPLHYTVIMSPQ). Residues 141–161 (LCGLLVLVSWIMSVLNSMLQS) form a helical membrane-spanning segment. The Extracellular segment spans residues 162–198 (LVTLQLSFCTDLEIPHFFCELNEMIHLACSDTFVNNM). The chain crosses the membrane as a helical span at residues 199–218 (VMHFAAVLLDGGPLVGILYS). Residues 219–238 (YCRIVSSIRAISSTQGKYKA) lie on the Cytoplasmic side of the membrane. Residues 239 to 259 (LSTCASHLSVVSIFYGTGLGV) traverse the membrane as a helical segment. Over 260–272 (YLSSTMTQNLHST) the chain is Extracellular. Residues 273–293 (AVASVMYTVVTPMLNPFIYSL) traverse the membrane as a helical segment. Residues 294–310 (RNKDIKGALTQFFRGKQ) lie on the Cytoplasmic side of the membrane.

It belongs to the G-protein coupled receptor 1 family.

It is found in the cell membrane. Functionally, odorant receptor. The polypeptide is Putative olfactory receptor 7A2 (OR7A2P) (Homo sapiens (Human)).